The following is a 205-amino-acid chain: Dephospho-CoA kinase (205 aa).

A DPCK domain is found at 6 to 205 (RIGLTGGIAA…EIYAGWCAGR (200 aa)). An ATP-binding site is contributed by 14-19 (AAGKST).

This sequence belongs to the CoaE family.

Its subcellular location is the cytoplasm. The enzyme catalyses 3'-dephospho-CoA + ATP = ADP + CoA + H(+). Its pathway is cofactor biosynthesis; coenzyme A biosynthesis; CoA from (R)-pantothenate: step 5/5. Functionally, catalyzes the phosphorylation of the 3'-hydroxyl group of dephosphocoenzyme A to form coenzyme A. In Bifidobacterium longum (strain NCC 2705), this protein is Dephospho-CoA kinase.